The primary structure comprises 544 residues: Membrane protein insertase YidC (544 aa).

6 helical membrane-spanning segments follow: residues 13–33 (LSLFLIGLFMLINDIFSSWML), 321–341 (LWYLIQVPMQMVMQVFYDVIP), 343–363 (WGLSIIFLTIVVRILIFPLTF), 409–429 (LGGCFPIILQLPIFFALYSLV), 461–481 (LYFVSWTDIRILPFIMMFTQL), and 506–526 (MPIMFFFILYNMPSGLLIYWI).

Belongs to the OXA1/ALB3/YidC family. Type 1 subfamily. As to quaternary structure, interacts with the Sec translocase complex via SecD. Specifically interacts with transmembrane segments of nascent integral membrane proteins during membrane integration.

It localises to the cell inner membrane. In terms of biological role, required for the insertion and/or proper folding and/or complex formation of integral membrane proteins into the membrane. Involved in integration of membrane proteins that insert both dependently and independently of the Sec translocase complex, as well as at least some lipoproteins. Aids folding of multispanning membrane proteins. In Borreliella afzelii (strain PKo) (Borrelia afzelii), this protein is Membrane protein insertase YidC.